The sequence spans 350 residues: MTSTKISLTQTVQKGGCAAKVAASELREILKQVKFPAAHPALMVDGGLFDDAAIYKINDEIALVQTLDFFTPIVDTPKLFGEIAAANALSDVYAMGGKPKTAMGILAFPLATLPKEVIVDVMQGASDKIAEADANFVGGHSIDDDTLKFGLSVTGFVNPQQVWTNAGAKVGDHLILTKPLGTGTLTAGLKRQEVQEADIMEALQSMATVNNAVDYMTPVLKNEVHAATDITGFGLSGHGMQLANASQVSLRISFSKIPRFAKALAFLEKGFLTKAHRSNAEYTKEAISVAGLESLQQHLLHDPQTSGGLLLSVSREVSADMVQALRAKFKSAEIIGEVLPRQDKAVIFEP.

The active site involves C17. ATP is bound by residues K20 and 48–50; that span reads LFD. A Mg(2+)-binding site is contributed by D51. ATP is bound by residues D68, D91, and 139-141; that span reads GHS. D91 lines the Mg(2+) pocket. Mg(2+) is bound at residue D229.

The protein belongs to the selenophosphate synthase 1 family. Class I subfamily. As to quaternary structure, homodimer. The cofactor is Mg(2+).

It catalyses the reaction hydrogenselenide + ATP + H2O = selenophosphate + AMP + phosphate + 2 H(+). Synthesizes selenophosphate from selenide and ATP. This chain is Selenide, water dikinase, found in Bdellovibrio bacteriovorus (strain ATCC 15356 / DSM 50701 / NCIMB 9529 / HD100).